Here is a 455-residue protein sequence, read N- to C-terminus: Epoxide hydrolase 1 (455 aa).

A helical; Signal-anchor for type III membrane protein transmembrane segment spans residues 1–21; that stretch reads MWLELILASVLGFVIYWFVSR. Residues 22 to 455 lie on the Cytoplasmic side of the membrane; sequence DKEETLPLED…RKFVSLAELQ (434 aa). The active-site Nucleophile is Asp-226. At Arg-295 the chain carries Dimethylated arginine. Catalysis depends on Tyr-374, which acts as the Proton donor. His-431 (proton acceptor) is an active-site residue. Lys-439 bears the N6-acetyllysine mark.

This sequence belongs to the peptidase S33 family.

Its subcellular location is the microsome membrane. It is found in the endoplasmic reticulum membrane. The catalysed reaction is cis-stilbene oxide + H2O = (1R,2R)-hydrobenzoin. The enzyme catalyses 1-(4-methoxyphenyl)-N-methyl-N-[(3-methyloxetan-3-yl)methyl]methanamine + H2O = 2-{[(4-methoxybenzyl)(methyl)amino]methyl}-2-methylpropane-1,3-diol. It catalyses the reaction 8,9-epoxy-(5Z,11Z,14Z)-eicosatrienoate + H2O = 8,9-dihydroxy-(5Z,11Z,14Z)-eicosatrienoate. It carries out the reaction 11,12-epoxy-(5Z,8Z,14Z)-eicosatrienoate + H2O = 11,12-dihydroxy-(5Z,8Z,14Z)-eicosatrienoate. The catalysed reaction is 2-(5Z,8Z,11Z,14Z-eicosatetraenoyl)-glycerol + H2O = glycerol + (5Z,8Z,11Z,14Z)-eicosatetraenoate + H(+). With respect to regulation, inhibited by 10-hydroxystearamide and methoxy-arachidonyl fluorophosphate. Biotransformation enzyme that catalyzes the hydrolysis of arene and aliphatic epoxides to less reactive and more water soluble dihydrodiols by the trans addition of water. May play a role in the metabolism of endogenous lipids such as epoxide-containing fatty acids. Metabolizes the abundant endocannabinoid 2-arachidonoylglycerol (2-AG) to free arachidonic acid (AA) and glycerol. Binds 20(S)-hydroxycholesterol (20(S)-OHC). The polypeptide is Epoxide hydrolase 1 (Mus musculus (Mouse)).